Here is a 173-residue protein sequence, read N- to C-terminus: Gamma-crystallin S-1 (173 aa).

Beta/gamma crystallin 'Greek key' domains lie at 2–40 (GKIIFYEDRNFQGRHYECSSDCADLSPYFSRCNSIRVES) and 41–83 (DWWV…RMLP). Residues 84-88 (HTGRS) form a connecting peptide region. 2 consecutive Beta/gamma crystallin 'Greek key' domains span residues 89 to 129 (YRMR…QVMD) and 130 to 172 (GYWI…RRIM).

This sequence belongs to the beta/gamma-crystallin family.

Crystallins are the dominant structural components of the vertebrate eye lens. The polypeptide is Gamma-crystallin S-1 (GS-1) (Chiloscyllium indicum (Slender bamboo shark)).